Consider the following 69-residue polypeptide: U2-agatoxin-Ao1i (69 aa).

Residues 1–20 (MKAIISLLLISAMVFSMIEA) form the signal peptide. Positions 21 to 34 (VPVXXGLQLFESER) are excised as a propeptide. 3 disulfides stabilise this stretch: Cys36/Cys52, Cys43/Cys57, and Cys51/Cys67. Leu68 is modified (leucine amide).

It belongs to the neurotoxin 01 (U2-agtx) family. In terms of tissue distribution, expressed by the venom gland.

The protein resides in the secreted. In terms of biological role, insect active toxin causing rapid but reversible paralysis in crickets. No activity shown in mammals. Does not show effect on mammalian voltage-gated calcium channels. This Agelena orientalis (Funnel-web spider) protein is U2-agatoxin-Ao1i.